The chain runs to 34 residues: U4-theraphotoxin-Hs1a (34 aa).

3 cysteine pairs are disulfide-bonded: C3–C17, C10–C22, and C16–C33.

Belongs to the neurotoxin 14 (magi-1) family. 05 (ICK-7) subfamily. In terms of tissue distribution, expressed by the venom gland.

It is found in the secreted. Its function is as follows. Intracisternal injection paralyzes mice. The protein is U4-theraphotoxin-Hs1a of Cyriopagopus schmidti (Chinese bird spider).